The following is a 306-amino-acid chain: Acetyl-coenzyme A carboxylase carboxyl transferase subunit beta (306 aa).

The region spanning 25 to 294 (LWIKDPTSGE…VFNPSDPSPT (270 aa)) is the CoA carboxyltransferase N-terminal domain. The interval 286 to 306 (FNPSDPSPTDSQTSLSTTKAA) is disordered. Residues 288–306 (PSDPSPTDSQTSLSTTKAA) show a composition bias toward low complexity.

It belongs to the AccD/PCCB family. As to quaternary structure, acetyl-CoA carboxylase is a heterohexamer composed of biotin carboxyl carrier protein (AccB), biotin carboxylase (AccC) and two subunits each of ACCase subunit alpha (AccA) and ACCase subunit beta (AccD).

It localises to the cytoplasm. It catalyses the reaction N(6)-carboxybiotinyl-L-lysyl-[protein] + acetyl-CoA = N(6)-biotinyl-L-lysyl-[protein] + malonyl-CoA. It participates in lipid metabolism; malonyl-CoA biosynthesis; malonyl-CoA from acetyl-CoA: step 1/1. Its function is as follows. Component of the acetyl coenzyme A carboxylase (ACC) complex. Biotin carboxylase (BC) catalyzes the carboxylation of biotin on its carrier protein (BCCP) and then the CO(2) group is transferred by the transcarboxylase to acetyl-CoA to form malonyl-CoA. The protein is Acetyl-coenzyme A carboxylase carboxyl transferase subunit beta of Bartonella grahamii (strain as4aup).